Consider the following 349-residue polypeptide: Arginine kinase (349 aa).

Residues 3 to 85 (DLAELWEKVS…LGPVILDYHK (83 aa)) enclose the Phosphagen kinase N-terminal domain. Residue 58–62 (GVGVY) coordinates substrate. In terms of domain architecture, Phosphagen kinase C-terminal spans 113–349 (WIVSTRVRVG…EEIIKLEKAA (237 aa)). Residues 116–120 (STRVR) and His-179 each bind ATP. A substrate-binding site is contributed by Glu-219. An ATP-binding site is contributed by Arg-223. Cys-265 is a substrate binding site. ATP contacts are provided by residues 274 to 278 (RASVH) and 302 to 307 (RGIHGE). Glu-307 contacts substrate.

The protein belongs to the ATP:guanido phosphotransferase family.

It catalyses the reaction L-arginine + ATP = N(omega)-phospho-L-arginine + ADP + H(+). This chain is Arginine kinase, found in Liolophura japonica (Chiton).